Consider the following 915-residue polypeptide: Protein translocase subunit SecA (915 aa).

ATP-binding positions include Gln-87, 105–109 (GEGKT), and Asp-516. Residues 854–915 (QKMQMRHEQL…KYKNCHGQLE (62 aa)) form a disordered region. 4 residues coordinate Zn(2+): Cys-899, Cys-901, Cys-910, and His-911.

This sequence belongs to the SecA family. Monomer and homodimer. Part of the essential Sec protein translocation apparatus which comprises SecA, SecYEG and auxiliary proteins SecDF-YajC and YidC. Zn(2+) is required as a cofactor.

It localises to the cell inner membrane. It is found in the cytoplasm. The catalysed reaction is ATP + H2O + cellular proteinSide 1 = ADP + phosphate + cellular proteinSide 2.. Part of the Sec protein translocase complex. Interacts with the SecYEG preprotein conducting channel. Has a central role in coupling the hydrolysis of ATP to the transfer of proteins into and across the cell membrane, serving both as a receptor for the preprotein-SecB complex and as an ATP-driven molecular motor driving the stepwise translocation of polypeptide chains across the membrane. The polypeptide is Protein translocase subunit SecA (Cellvibrio japonicus (strain Ueda107) (Pseudomonas fluorescens subsp. cellulosa)).